Here is a 686-residue protein sequence, read N- to C-terminus: Phosphatidylinositol 4,5-bisphosphate-binding protein SLM1 (686 aa).

Positions 33-147 (RSMTSADHAN…KQLQGKNSLT (115 aa)) are disordered. Low complexity predominate over residues 45 to 63 (QQQQQQQQQQQQQQQQQQQ). Over residues 64–126 (SASFQNGSLT…PNIDSNTNVT (63 aa)) the composition is skewed to polar residues. Residues 133–144 (NNNNGKQLQGKN) are compositionally biased toward low complexity. Serine 145, serine 150, and serine 153 each carry phosphoserine. Positions 157 to 172 (SSLQRQRLAQQQQQQQ) are enriched in low complexity. A disordered region spans residues 157 to 176 (SSLQRQRLAQQQQQQQDPRS). Residues 296-381 (RLEDLRRDLI…FLHEAFDNLE (86 aa)) are a coiled coil. Residues 468 to 581 (YEIKSGFLER…WFDNLKILTS (114 aa)) form the PH domain. The disordered stretch occupies residues 626 to 669 (VENDENDDINSNYVGSTVTPKLDNQTNTNTSMSSLPDTNDSELQ). The segment covering 634 to 663 (INSNYVGSTVTPKLDNQTNTNTSMSSLPDT) has biased composition (polar residues). Residues 673–678 (PNIYIQ) carry the PXIXIT-like, required for interaction with CNA1 and CNA2, and calcineurin-dependent dephosphorylation motif.

Heterodimer of SLM1-SLM2. Binds phosphatidylinositol 4,5-bisphosphate, which is required for function. Interacts with the TORC2 subunits AVO2, BIT61 and TOR2. Interacts with the calcineurin catalytic subunits CNA1 and CNA2. Post-translationally, phosphorylated by the target of rapamycin complex 2 (TORC2) and dephosphorylated by serine/threonine-protein phosphatase 2B (calcineurin). Dephosphorylated in response to the disruption or inhibition of sphingolipid synthesis.

The protein localises to the cell membrane. Its function is as follows. Together with SLM2, acts as an effector of the TORC2- and calcineurin-signaling pathways. Phosphorylated and activated by TORC2 under favorable growth conditions. Mediates actin polarization via inhibition of calcineurin-dependent transcription. Upon nutrient limitation or environmental stress, gets dephosphorylated by calcineurin. Dephosphorylation inhibits its interaction with TORC2, thereby antagonizing TORC2 signaling and mediating calcineurin-dependent actin depolarization. May play a role in the response to the disruption of sphingolipid synthesis, where dephosphorylation of SLM1 leads to the activation and phosphorylation of YPK1 through the TORC2 and PKH1 pathways, which in turn phosphorylates ORM1 and LAG1 to activate sphingolipid synthesis. Also functions in heat-induced, calcineurin-mediated uracil permease (FUR4) endocytosis. The polypeptide is Phosphatidylinositol 4,5-bisphosphate-binding protein SLM1 (SLM1) (Saccharomyces cerevisiae (strain ATCC 204508 / S288c) (Baker's yeast)).